The following is a 61-amino-acid chain: uncharacterized protein (61 aa).

The helical transmembrane segment at 10–27 threads the bilayer; it reads RILFFFFIFFTLFLFNIP.

It is found in the membrane. This is an uncharacterized protein from Dictyostelium discoideum (Social amoeba).